The sequence spans 54 residues: Large ribosomal subunit protein bL33 (54 aa).

The protein belongs to the bacterial ribosomal protein bL33 family.

The sequence is that of Large ribosomal subunit protein bL33 from Herpetosiphon aurantiacus (strain ATCC 23779 / DSM 785 / 114-95).